Consider the following 305-residue polypeptide: tRNA dimethylallyltransferase (305 aa).

11–18 (GPTAVGKT) lines the ATP pocket. 13–18 (TAVGKT) provides a ligand contact to substrate. Residues 36-39 (DSMQ) form an interaction with substrate tRNA region.

It belongs to the IPP transferase family. In terms of assembly, monomer. Mg(2+) serves as cofactor.

The catalysed reaction is adenosine(37) in tRNA + dimethylallyl diphosphate = N(6)-dimethylallyladenosine(37) in tRNA + diphosphate. Its function is as follows. Catalyzes the transfer of a dimethylallyl group onto the adenine at position 37 in tRNAs that read codons beginning with uridine, leading to the formation of N6-(dimethylallyl)adenosine (i(6)A). The polypeptide is tRNA dimethylallyltransferase (Listeria innocua serovar 6a (strain ATCC BAA-680 / CLIP 11262)).